Here is a 77-residue protein sequence, read N- to C-terminus: Large ribosomal subunit protein uL29 (77 aa).

This sequence belongs to the universal ribosomal protein uL29 family.

The polypeptide is Large ribosomal subunit protein uL29 (rpmC) (Mycobacterium bovis (strain ATCC BAA-935 / AF2122/97)).